A 434-amino-acid chain; its full sequence is Serine--tRNA ligase (434 aa).

Residue 239–241 (TAE) coordinates L-serine. 270-272 (RSE) is an ATP binding site. E293 serves as a coordination point for L-serine. 357–360 (EISS) is a binding site for ATP. Residue S393 coordinates L-serine.

It belongs to the class-II aminoacyl-tRNA synthetase family. Type-1 seryl-tRNA synthetase subfamily. Homodimer. The tRNA molecule binds across the dimer.

The protein resides in the cytoplasm. The catalysed reaction is tRNA(Ser) + L-serine + ATP = L-seryl-tRNA(Ser) + AMP + diphosphate + H(+). It catalyses the reaction tRNA(Sec) + L-serine + ATP = L-seryl-tRNA(Sec) + AMP + diphosphate + H(+). It participates in aminoacyl-tRNA biosynthesis; selenocysteinyl-tRNA(Sec) biosynthesis; L-seryl-tRNA(Sec) from L-serine and tRNA(Sec): step 1/1. In terms of biological role, catalyzes the attachment of serine to tRNA(Ser). Is also able to aminoacylate tRNA(Sec) with serine, to form the misacylated tRNA L-seryl-tRNA(Sec), which will be further converted into selenocysteinyl-tRNA(Sec). In Mesorhizobium japonicum (strain LMG 29417 / CECT 9101 / MAFF 303099) (Mesorhizobium loti (strain MAFF 303099)), this protein is Serine--tRNA ligase.